A 30-amino-acid polypeptide reads, in one-letter code: Cyclotide cter-H (30 aa).

The cyclopeptide (Gly-Asp) cross-link spans 1–30 (GLPCGESCVFIPCITTVVGCSCKNKVCYND). Disulfide bonds link cysteine 4–cysteine 20, cysteine 8–cysteine 22, and cysteine 13–cysteine 27.

Post-translationally, contains 3 disulfide bonds. In terms of processing, this is a cyclic peptide.

In terms of biological role, probably participates in a plant defense mechanism. This Clitoria ternatea (Butterfly pea) protein is Cyclotide cter-H.